The primary structure comprises 602 residues: Elongation factor 4 (602 aa).

In terms of domain architecture, tr-type G spans 8–189 (KNIRNFSIIA…KIITTIPAPS (182 aa)). GTP contacts are provided by residues 20–25 (DHGKST) and 136–139 (NKID).

Belongs to the TRAFAC class translation factor GTPase superfamily. Classic translation factor GTPase family. LepA subfamily.

The protein localises to the cell inner membrane. It catalyses the reaction GTP + H2O = GDP + phosphate + H(+). Functionally, required for accurate and efficient protein synthesis under certain stress conditions. May act as a fidelity factor of the translation reaction, by catalyzing a one-codon backward translocation of tRNAs on improperly translocated ribosomes. Back-translocation proceeds from a post-translocation (POST) complex to a pre-translocation (PRE) complex, thus giving elongation factor G a second chance to translocate the tRNAs correctly. Binds to ribosomes in a GTP-dependent manner. In Helicobacter pylori (strain Shi470), this protein is Elongation factor 4.